A 390-amino-acid chain; its full sequence is S-adenosylmethionine synthase (390 aa).

Glutamate 12 is a Mg(2+) binding site. Histidine 18 provides a ligand contact to ATP. Residue glutamate 46 coordinates K(+). 2 residues coordinate L-methionine: glutamate 59 and glutamine 102. ATP is bound by residues 170–172 (DGK), 238–241 (SGRF), aspartate 249, 255–256 (RK), alanine 272, lysine 276, and lysine 280. Aspartate 249 is a binding site for L-methionine. L-methionine is bound at residue lysine 280.

The protein belongs to the AdoMet synthase family. As to quaternary structure, homotetramer. The cofactor is Mn(2+). Requires Mg(2+) as cofactor. It depends on Co(2+) as a cofactor. K(+) is required as a cofactor.

It localises to the cytoplasm. It carries out the reaction L-methionine + ATP + H2O = S-adenosyl-L-methionine + phosphate + diphosphate. It participates in amino-acid biosynthesis; S-adenosyl-L-methionine biosynthesis; S-adenosyl-L-methionine from L-methionine: step 1/1. In terms of biological role, catalyzes the formation of S-adenosylmethionine from methionine and ATP. The reaction comprises two steps that are both catalyzed by the same enzyme: formation of S-adenosylmethionine (AdoMet) and triphosphate, and subsequent hydrolysis of the triphosphate. The chain is S-adenosylmethionine synthase (METM) from Chlamydomonas reinhardtii (Chlamydomonas smithii).